We begin with the raw amino-acid sequence, 208 residues long: Protein late bloomer (208 aa).

4 consecutive transmembrane segments (helical) span residues 10 to 30 (IASI…IGWI), 41 to 61 (FVIA…LGIF), 67 to 87 (SVVL…LQIV), and 174 to 194 (FIIV…LAVF).

This sequence belongs to the tetraspanin (TM4SF) family. In terms of tissue distribution, transiently expressed on motor axons, growth cones and terminal arbors.

The protein resides in the membrane. Its subcellular location is the synapse. In terms of biological role, facilitates synapse formation. The polypeptide is Protein late bloomer (lbm) (Drosophila melanogaster (Fruit fly)).